A 503-amino-acid polypeptide reads, in one-letter code: Beta-amylase Tri a 17 (503 aa).

Substrate is bound by residues D51, H91, and D99. E184 (proton donor) is an active-site residue. Residues K293, H298, and T340 each contribute to the substrate site. The Proton acceptor role is filled by E378. Substrate contacts are provided by residues 379-380 (NA) and R418.

It belongs to the glycosyl hydrolase 14 family.

The enzyme catalyses Hydrolysis of (1-&gt;4)-alpha-D-glucosidic linkages in polysaccharides so as to remove successive maltose units from the non-reducing ends of the chains.. This is Beta-amylase Tri a 17 (BMY1) from Triticum aestivum (Wheat).